The primary structure comprises 630 residues: Probable potassium transport system protein Kup (630 aa).

A run of 12 helical transmembrane segments spans residues 17-37 (LAIA…LYSL), 51-71 (PSAI…VVGI), 105-125 (ITGL…GDAV), 144-164 (PQLS…LFWI), 175-195 (LFGP…IYHI), 218-238 (VLLA…AEAL), 255-275 (YVLV…LLLL), 283-303 (PFFL…STVA), 344-364 (IYVP…VIGF), 374-394 (YGIA…VVMV), 402-422 (LLVA…FGAN), and 428-448 (QGGW…MTWY).

Belongs to the HAK/KUP transporter (TC 2.A.72) family.

The protein resides in the cell inner membrane. The enzyme catalyses K(+)(in) + H(+)(in) = K(+)(out) + H(+)(out). In terms of biological role, transport of potassium into the cell. Likely operates as a K(+):H(+) symporter. In Burkholderia mallei (strain NCTC 10247), this protein is Probable potassium transport system protein Kup.